We begin with the raw amino-acid sequence, 104 residues long: Cuticle protein 67, isoform B (104 aa).

Tandem repeats lie at residues 7 to 10 (AAPA), 14 to 17 (AAPA), 21 to 24 (AAPA), 28 to 31 (AAPA), 85 to 88 (AAPA), 92 to 95 (AAPA), and 98 to 101 (AAPA).

Component of the cuticle of migratory locust which contains more than 100 different structural proteins. The chain is Cuticle protein 67, isoform B from Locusta migratoria (Migratory locust).